The chain runs to 165 residues: NADPH-dependent 7-cyano-7-deazaguanine reductase (165 aa).

The active-site Thioimide intermediate is Cys56. The active-site Proton donor is Asp63. Residues 78–80 and 97–98 contribute to the substrate site; these read VES and HE.

Belongs to the GTP cyclohydrolase I family. QueF type 1 subfamily.

The protein localises to the cytoplasm. The enzyme catalyses 7-aminomethyl-7-carbaguanine + 2 NADP(+) = 7-cyano-7-deazaguanine + 2 NADPH + 3 H(+). It functions in the pathway tRNA modification; tRNA-queuosine biosynthesis. In terms of biological role, catalyzes the NADPH-dependent reduction of 7-cyano-7-deazaguanine (preQ0) to 7-aminomethyl-7-deazaguanine (preQ1). This Bacillus cereus (strain ATCC 14579 / DSM 31 / CCUG 7414 / JCM 2152 / NBRC 15305 / NCIMB 9373 / NCTC 2599 / NRRL B-3711) protein is NADPH-dependent 7-cyano-7-deazaguanine reductase.